Consider the following 1377-residue polypeptide: DNA-directed RNA polymerase subunit beta' (1377 aa).

Zn(2+)-binding residues include Cys60, Cys62, Cys75, and Cys78. 3 residues coordinate Mg(2+): Asp449, Asp451, and Asp453. Zn(2+) contacts are provided by Cys777, Cys851, Cys858, and Cys861.

It belongs to the RNA polymerase beta' chain family. The RNAP catalytic core consists of 2 alpha, 1 beta, 1 beta' and 1 omega subunit. When a sigma factor is associated with the core the holoenzyme is formed, which can initiate transcription. It depends on Mg(2+) as a cofactor. Requires Zn(2+) as cofactor.

The enzyme catalyses RNA(n) + a ribonucleoside 5'-triphosphate = RNA(n+1) + diphosphate. DNA-dependent RNA polymerase catalyzes the transcription of DNA into RNA using the four ribonucleoside triphosphates as substrates. This is DNA-directed RNA polymerase subunit beta' from Borreliella burgdorferi (strain ATCC 35210 / DSM 4680 / CIP 102532 / B31) (Borrelia burgdorferi).